The sequence spans 164 residues: Phosphopantetheine adenylyltransferase (164 aa).

Residue serine 9 participates in substrate binding. ATP contacts are provided by residues 9-10 (SF) and histidine 17. The substrate site is built by lysine 41, valine 78, and arginine 92. ATP is bound by residues 93-95 (GLR), glutamate 103, and 128-134 (SRPITAT).

The protein belongs to the bacterial CoaD family. In terms of assembly, homohexamer. Mg(2+) serves as cofactor.

It localises to the cytoplasm. It carries out the reaction (R)-4'-phosphopantetheine + ATP + H(+) = 3'-dephospho-CoA + diphosphate. It participates in cofactor biosynthesis; coenzyme A biosynthesis; CoA from (R)-pantothenate: step 4/5. Functionally, reversibly transfers an adenylyl group from ATP to 4'-phosphopantetheine, yielding dephospho-CoA (dPCoA) and pyrophosphate. The polypeptide is Phosphopantetheine adenylyltransferase (Agrobacterium fabrum (strain C58 / ATCC 33970) (Agrobacterium tumefaciens (strain C58))).